The following is a 127-amino-acid chain: Major sperm protein 10/36/56/76 (127 aa).

An N-acetylalanine modification is found at Ala2. One can recognise an MSP domain in the interval 9 to 126; sequence DIQTQPNAKI…RRKNLPIEYN (118 aa).

In terms of tissue distribution, sperm.

The protein localises to the cell projection. Its subcellular location is the pseudopodium. The protein resides in the cytoplasm. It is found in the cytoskeleton. In terms of biological role, central component in molecular interactions underlying sperm crawling. Forms an extensive filament system that extends from sperm villipoda, along the leading edge of the pseudopod. The sequence is that of Major sperm protein 10/36/56/76 (msp-10) from Caenorhabditis elegans.